Consider the following 449-residue polypeptide: Tryptophan--tRNA ligase (449 aa).

Residues 10-12 (TTT) and 18-19 (GN) contribute to the ATP site. The short motif at 11 to 19 (TTGTPHLGN) is the 'HIGH' region element. D143 is a binding site for L-tryptophan. ATP is bound by residues 155–157 (GRD), L197, and 204–208 (KMSKS). Positions 204-208 (KMSKS) match the 'KMSKS' region motif.

This sequence belongs to the class-I aminoacyl-tRNA synthetase family. As to quaternary structure, homodimer.

The protein localises to the cytoplasm. It carries out the reaction tRNA(Trp) + L-tryptophan + ATP = L-tryptophyl-tRNA(Trp) + AMP + diphosphate + H(+). In terms of biological role, catalyzes the attachment of tryptophan to tRNA(Trp). This is Tryptophan--tRNA ligase from Pseudomonas syringae pv. tomato (strain ATCC BAA-871 / DC3000).